Consider the following 145-residue polypeptide: Large ribosomal subunit protein uL15 (145 aa).

The segment at 20–39 (GRVGKHRKHPSGRGNAGGEH) is disordered.

It belongs to the universal ribosomal protein uL15 family.

This Trypanosoma brucei brucei protein is Large ribosomal subunit protein uL15 (RPL27A).